Consider the following 431-residue polypeptide: L-lysine N6-monooxygenase MbtG (431 aa).

The signal sequence occupies residues 1-21 (MNPTLAVLGAGAKAVAVAAKA).

The protein belongs to the lysine N(6)-hydroxylase/L-ornithine N(5)-oxygenase family. It depends on FAD as a cofactor.

The enzyme catalyses L-lysine + NADPH + O2 = N(6)-hydroxy-L-lysine + NADP(+) + H2O. It functions in the pathway siderophore biosynthesis; mycobactin biosynthesis. Its function is as follows. Flavoprotein monooxygenase required for N-hydroxylation of the two acylated lysine residues during mycobactin assembly, thus producing the hydroxamate groups necessary for iron sequestration. Is also able, but less efficiently, to hydroxylate L-lysine (non acylated) in vitro. The chain is L-lysine N6-monooxygenase MbtG (mbtG) from Mycobacterium bovis (strain ATCC BAA-935 / AF2122/97).